Here is a 518-residue protein sequence, read N- to C-terminus: Probable thiamine biosynthetic bifunctional enzyme (518 aa).

Residues 1-229 (MKRQIDYSLY…ATPPCFAQAR (229 aa)) are thiamine-phosphate synthase. 4-amino-2-methyl-5-(diphosphooxymethyl)pyrimidine contacts are provided by residues 40–44 (QHREK) and Asn-72. Mg(2+) is bound by residues Asp-73 and Asp-92. A 4-amino-2-methyl-5-(diphosphooxymethyl)pyrimidine-binding site is contributed by Ser-111. A 2-[(2R,5Z)-2-carboxy-4-methylthiazol-5(2H)-ylidene]ethyl phosphate-binding site is contributed by 137-139 (TNT). Residue Lys-140 participates in 4-amino-2-methyl-5-(diphosphooxymethyl)pyrimidine binding. Residues Gly-173 and 199–200 (VS) each bind 2-[(2R,5Z)-2-carboxy-4-methylthiazol-5(2H)-ylidene]ethyl phosphate. The tract at residues 230–518 (SSLTTPKDLL…IERAKLEKAE (289 aa)) is hydroxyethylthiazole kinase. Met-281 is a binding site for 5-(2-hydroxyethyl)-4-methylthiazole. 2 residues coordinate ATP: Lys-355 and Ser-403. Ala-430 is a binding site for 5-(2-hydroxyethyl)-4-methylthiazole. Cys-433 acts as the Proton acceptor; for hydroxyethylthiazole kinase activity in catalysis.

The protein in the N-terminal section; belongs to the thiamine-phosphate synthase family. This sequence in the C-terminal section; belongs to the Thz kinase family. Requires Mg(2+) as cofactor.

It carries out the reaction 2-[(2R,5Z)-2-carboxy-4-methylthiazol-5(2H)-ylidene]ethyl phosphate + 4-amino-2-methyl-5-(diphosphooxymethyl)pyrimidine + 2 H(+) = thiamine phosphate + CO2 + diphosphate. The catalysed reaction is 2-(2-carboxy-4-methylthiazol-5-yl)ethyl phosphate + 4-amino-2-methyl-5-(diphosphooxymethyl)pyrimidine + 2 H(+) = thiamine phosphate + CO2 + diphosphate. The enzyme catalyses 4-methyl-5-(2-phosphooxyethyl)-thiazole + 4-amino-2-methyl-5-(diphosphooxymethyl)pyrimidine + H(+) = thiamine phosphate + diphosphate. It catalyses the reaction 5-(2-hydroxyethyl)-4-methylthiazole + ATP = 4-methyl-5-(2-phosphooxyethyl)-thiazole + ADP + H(+). It participates in cofactor biosynthesis; thiamine diphosphate biosynthesis; 4-methyl-5-(2-phosphoethyl)-thiazole from 5-(2-hydroxyethyl)-4-methylthiazole: step 1/1. The protein operates within cofactor biosynthesis; thiamine diphosphate biosynthesis; thiamine phosphate from 4-amino-2-methyl-5-diphosphomethylpyrimidine and 4-methyl-5-(2-phosphoethyl)-thiazole: step 1/1. Its function is as follows. Condenses 4-methyl-5-(beta-hydroxyethyl)thiazole monophosphate (THZ-P) and 2-methyl-4-amino-5-hydroxymethyl pyrimidine pyrophosphate (HMP-PP) to form thiamine monophosphate (TMP). The chain is Probable thiamine biosynthetic bifunctional enzyme (thi4) from Schizosaccharomyces pombe (strain 972 / ATCC 24843) (Fission yeast).